The chain runs to 202 residues: dTTP/UTP pyrophosphatase (202 aa).

The active-site Proton acceptor is the D80.

This sequence belongs to the Maf family. YhdE subfamily. A divalent metal cation serves as cofactor.

It localises to the cytoplasm. It catalyses the reaction dTTP + H2O = dTMP + diphosphate + H(+). The catalysed reaction is UTP + H2O = UMP + diphosphate + H(+). Its function is as follows. Nucleoside triphosphate pyrophosphatase that hydrolyzes dTTP and UTP. May have a dual role in cell division arrest and in preventing the incorporation of modified nucleotides into cellular nucleic acids. This Alkalilimnicola ehrlichii (strain ATCC BAA-1101 / DSM 17681 / MLHE-1) protein is dTTP/UTP pyrophosphatase.